The chain runs to 325 residues: Ribosomal RNA small subunit methyltransferase H (325 aa).

Residues 41 to 43 (GGH), Asp-60, Tyr-87, Asp-108, and Gln-115 each bind S-adenosyl-L-methionine. The segment at 295 to 325 (DDDEKAANPRAAPVRLRAAERTRASEDRRGS) is disordered. The segment covering 311 to 325 (RAAERTRASEDRRGS) has biased composition (basic and acidic residues).

This sequence belongs to the methyltransferase superfamily. RsmH family.

The protein localises to the cytoplasm. The catalysed reaction is cytidine(1402) in 16S rRNA + S-adenosyl-L-methionine = N(4)-methylcytidine(1402) in 16S rRNA + S-adenosyl-L-homocysteine + H(+). Its function is as follows. Specifically methylates the N4 position of cytidine in position 1402 (C1402) of 16S rRNA. The sequence is that of Ribosomal RNA small subunit methyltransferase H from Leifsonia xyli subsp. xyli (strain CTCB07).